Reading from the N-terminus, the 294-residue chain is Hydroxyethylthiazole kinase (294 aa).

Position 57 (Met-57) interacts with substrate. Residues Arg-132 and Ser-196 each coordinate ATP. Gly-223 is a binding site for substrate.

Belongs to the Thz kinase family. Mg(2+) serves as cofactor.

It carries out the reaction 5-(2-hydroxyethyl)-4-methylthiazole + ATP = 4-methyl-5-(2-phosphooxyethyl)-thiazole + ADP + H(+). Its pathway is cofactor biosynthesis; thiamine diphosphate biosynthesis; 4-methyl-5-(2-phosphoethyl)-thiazole from 5-(2-hydroxyethyl)-4-methylthiazole: step 1/1. Functionally, catalyzes the phosphorylation of the hydroxyl group of 4-methyl-5-beta-hydroxyethylthiazole (THZ). The protein is Hydroxyethylthiazole kinase of Bifidobacterium adolescentis (strain ATCC 15703 / DSM 20083 / NCTC 11814 / E194a).